The primary structure comprises 147 residues: Large ribosomal subunit protein bL9 (147 aa).

This sequence belongs to the bacterial ribosomal protein bL9 family.

Its function is as follows. Binds to the 23S rRNA. This is Large ribosomal subunit protein bL9 from Campylobacter hominis (strain ATCC BAA-381 / DSM 21671 / CCUG 45161 / LMG 19568 / NCTC 13146 / CH001A).